The following is a 424-amino-acid chain: Calreticulin-2 (424 aa).

The N-terminal stretch at 1–22 (MAKMIPSLVSLILIGLVAIASA) is a signal peptide. An N-linked (GlcNAc...) asparagine glycan is attached at Asn-59. Cys-108 and Cys-140 form a disulfide bridge. Tyr-112, Lys-114, Tyr-131, and Asp-138 together coordinate an alpha-D-glucoside. Tandem repeats lie at residues 194–205 (KQTGSLYSDWDL), 213–224 (DPSAKKPEDWDE), 230–241 (DPEDKKPDGYDD), 248–259 (DTDSKKPEDWDD), 263–273 (GEWTAPTIPNP), 277–287 (GEWKPKQIKNP), and 291–301 (GKWEAPLIDNP). A 4 X approximate repeats region spans residues 194–259 (KQTGSLYSDW…DSKKPEDWDD (66 aa)). Basic and acidic residues predominate over residues 210-220 (KIKDPSAKKPE). Residues 210 to 279 (KIKDPSAKKP…IPNPEYMGEW (70 aa)) are disordered. Over residues 221 to 230 (DWDEQEYISD) the composition is skewed to acidic residues. Basic and acidic residues predominate over residues 231–255 (PEDKKPDGYDDIPKEIPDTDSKKPE). The 3 X approximate repeats stretch occupies residues 263-301 (GEWTAPTIPNPEYMGEWKPKQIKNPNYKGKWEAPLIDNP). Glu-321 contributes to the an alpha-D-glucoside binding site. A compositionally biased stretch (basic and acidic residues) spans 362-378 (FDEAEKKNEEEESKDAP). Positions 362-424 (FDEAEKKNEE…EKDATAHDEL (63 aa)) are disordered. Over residues 379-397 (AESDAEDEPEDDEGGDDSD) the composition is skewed to acidic residues. Phosphoserine occurs at positions 381 and 396. A compositionally biased stretch (basic and acidic residues) spans 398-424 (SESKAEETKSVDSEETSEKDATAHDEL). The short motif at 421-424 (HDEL) is the Prevents secretion from ER element.

This sequence belongs to the calreticulin family.

The protein resides in the endoplasmic reticulum lumen. Molecular calcium-binding chaperone promoting folding, oligomeric assembly and quality control in the ER via the calreticulin/calnexin cycle. This lectin may interact transiently with almost all of the monoglucosylated glycoproteins that are synthesized in the ER. In Arabidopsis thaliana (Mouse-ear cress), this protein is Calreticulin-2 (CRT2).